A 478-amino-acid polypeptide reads, in one-letter code: ATP-dependent RNA helicase DDX19A (478 aa).

A2 is modified (N-acetylalanine). The N-terminal lobe stretch occupies residues 2 to 299; that stretch reads ATDSWALAVD…DPNVIKLKRE (298 aa). Residue K26 forms a Glycyl lysine isopeptide (Lys-Gly) (interchain with G-Cter in SUMO1); alternate linkage. K26 is covalently cross-linked (Glycyl lysine isopeptide (Lys-Gly) (interchain with G-Cter in SUMO2); alternate). T42 bears the Phosphothreonine mark. Residues 54 to 67 form an N-terminal helix region; sequence DRAAQSLLNKLIRS. The Q motif motif lies at 91–119; that stretch reads KSFEELRLKPQLLQGVYAMGFNRPSKIQE. ATP-binding positions include Q118 and 137–144; that span reads SQSGTGKT. The Helicase ATP-binding domain maps to 124 to 294; the sequence is MMLAEPPQNL…QKVVPDPNVI (171 aa). Positions 241 to 244 match the DEAD box motif; the sequence is DEAD. The segment at 300–478 is C-terminal lobe; the sequence is EETLDTIKQY…DLDEIEKIAN (179 aa). Positions 305-473 constitute a Helicase C-terminal domain; sequence TIKQYYVLCS…RLDTDDLDEI (169 aa). 2 residues coordinate ATP: R428 and R431.

This sequence belongs to the DEAD box helicase family. DDX19/DBP5 subfamily.

The protein localises to the cytoplasm. Its subcellular location is the nucleus. It localises to the nucleoplasm. The enzyme catalyses ATP + H2O = ADP + phosphate + H(+). In terms of biological role, ATP-dependent RNA helicase involved in mRNA export from the nucleus. Rather than unwinding RNA duplexes, DDX19 functions as a remodeler of ribonucleoprotein particles, whereby proteins bound to nuclear mRNA are dissociated and replaced by cytoplasmic mRNA binding proteins. The polypeptide is ATP-dependent RNA helicase DDX19A (DDX19A) (Homo sapiens (Human)).